Reading from the N-terminus, the 580-residue chain is RuBisCO large subunit-binding protein subunit alpha, chloroplastic (580 aa).

Residues 1 to 17 (MAQSQLAKGSRQTTGRP) are compositionally biased toward polar residues. The tract at residues 1 to 24 (MAQSQLAKGSRQTTGRPFQNKPAR) is disordered.

This sequence belongs to the chaperonin (HSP60) family. In terms of assembly, oligomer of probably six alpha and six beta subunits.

It is found in the plastid. The protein resides in the chloroplast. This protein binds RuBisCO small and large subunits and is implicated in the assembly of the enzyme oligomer. This is RuBisCO large subunit-binding protein subunit alpha, chloroplastic from Chlamydomonas reinhardtii (Chlamydomonas smithii).